Reading from the N-terminus, the 845-residue chain is Poly(A) RNA polymerase gld-4 (845 aa).

The disordered stretch occupies residues 1 to 55 (MNEDSRLSSSQQPSTSTPRSSIPSTMNSDEPNTCRRLSQSQEQPSTSRTCKSETP). The segment covering 7–25 (LSSSQQPSTSTPRSSIPST) has biased composition (low complexity). Positions 26–49 (MNSDEPNTCRRLSQSQEQPSTSRT) are enriched in polar residues. The Mg(2+) site is built by aspartate 139 and aspartate 141. The 60-residue stretch at 276 to 335 (NLGHLLLRFLELYSLEFNFEEMGISPGQCCYIPKSASGARYGHKQAQPGNLALEDPLLTA) folds into the PAP-associated domain. Basic and acidic residues predominate over residues 482 to 506 (KSLEKMPACDDNKKEEELVATRETD). Disordered stretches follow at residues 482 to 733 (KSLE…SEEP) and 788 to 845 (NALT…RLQR). Low complexity predominate over residues 535 to 551 (TSTQSVNTSATVSTAAS). Polar residues-rich tracts occupy residues 561-571 (PGLSSSMGNQS) and 579-588 (GINNRNNSAV). Positions 605–620 (RESKRTQTTSEDKMQD) are enriched in basic and acidic residues. Basic residues predominate over residues 643–653 (SHKHRNAHPQR). Polar residues-rich tracts occupy residues 654 to 666 (QRPS…QGSD), 695 to 732 (RQQT…SSEE), 788 to 805 (NALT…TSMQ), and 819 to 828 (DNNSATSSTD).

In terms of assembly, interacts with gls-1 isoform C. It depends on Mg(2+) as a cofactor. Mn(2+) serves as cofactor. As to expression, germline-specific.

It is found in the cytoplasm. The protein localises to the cytoplasmic granule. The protein resides in the perinuclear region. It carries out the reaction RNA(n) + ATP = RNA(n)-3'-adenine ribonucleotide + diphosphate. Cytoplasmic poly(A) RNA polymerase that adds successive AMP monomers to the 3'-end of specific RNAs, forming a poly(A) tail. The enzymatic activity is enhanced by its interaction with gls-1. Required, together with gld-2, for early meiotic progression in male and female germ cells and for gld-1 protein accumulation in the hermaphrodite germline. In the germline, forms a complex with gls-1 which directly binds to gld-1 mRNA and prevents its degradation. The chain is Poly(A) RNA polymerase gld-4 from Caenorhabditis elegans.